The primary structure comprises 318 residues: DNA-directed RNA polymerase subunit alpha 2 (318 aa).

The interval 1–227 is alpha N-terminal domain (alpha-NTD); the sequence is MALENLLHPT…NQLRNILDIE (227 aa). The tract at residues 242 to 318 is alpha C-terminal domain (alpha-CTD); it reads INPILLKHVE…TLIENWPQDL (77 aa).

Belongs to the RNA polymerase alpha chain family. In terms of assembly, homodimer. The RNAP catalytic core consists of 2 alpha, 1 beta, 1 beta' and 1 omega subunit. When a sigma factor is associated with the core the holoenzyme is formed, which can initiate transcription.

It carries out the reaction RNA(n) + a ribonucleoside 5'-triphosphate = RNA(n+1) + diphosphate. DNA-dependent RNA polymerase catalyzes the transcription of DNA into RNA using the four ribonucleoside triphosphates as substrates. The polypeptide is DNA-directed RNA polymerase subunit alpha 2 (Francisella tularensis subsp. tularensis (strain FSC 198)).